The chain runs to 233 residues: Large ribosomal subunit protein uL1 (233 aa).

Belongs to the universal ribosomal protein uL1 family. Part of the 50S ribosomal subunit.

In terms of biological role, binds directly to 23S rRNA. The L1 stalk is quite mobile in the ribosome, and is involved in E site tRNA release. Protein L1 is also a translational repressor protein, it controls the translation of the L11 operon by binding to its mRNA. This Geobacillus stearothermophilus (Bacillus stearothermophilus) protein is Large ribosomal subunit protein uL1.